The sequence spans 64 residues: uncharacterized protein (64 aa).

Positions 1-64 (MMITRGWEGW…LDPAISRSSS (64 aa)) are disordered. Positions 16-28 (RGAGTGTGLGGPG) are enriched in gly residues.

This is an uncharacterized protein from Homo sapiens (Human).